The sequence spans 93 residues: Cell division protein CrgA (93 aa).

A run of 2 helical transmembrane segments spans residues 31–51 and 70–90; these read VWFV…LMVF and LGPW…LLTM.

It belongs to the CrgA family.

It localises to the cell membrane. In terms of biological role, involved in cell division. The chain is Cell division protein CrgA from Mycobacterium avium (strain 104).